Consider the following 156-residue polypeptide: MKCPKCNSTHSRVVDSRHADEANAIRRRRECENCGTRFTTFEHIEVSPLIVVKKDGTREQFLREKILNGLVRSCEKRPVRYQQLEDITNKVEWQLRDEGQTEISSREIGEHVMNLLMHVDQVSYVRFASVYKEFKDVDQLLESMQGILSDNKRSDK.

A zinc finger spans residues 3 to 34 (CPKCNSTHSRVVDSRHADEANAIRRRRECENC). The ATP-cone domain occupies 49-139 (LIVVKKDGTR…VYKEFKDVDQ (91 aa)).

It belongs to the NrdR family. The cofactor is Zn(2+).

In terms of biological role, negatively regulates transcription of bacterial ribonucleotide reductase nrd genes and operons by binding to NrdR-boxes. The sequence is that of Transcriptional repressor NrdR from Staphylococcus epidermidis (strain ATCC 35984 / DSM 28319 / BCRC 17069 / CCUG 31568 / BM 3577 / RP62A).